We begin with the raw amino-acid sequence, 186 residues long: uncharacterized protein (186 aa).

CBS domains follow at residues 10–69 and 77–133; these read IMKK…KLPP and ISSG…IIST.

This is an uncharacterized protein from Methanocaldococcus jannaschii (strain ATCC 43067 / DSM 2661 / JAL-1 / JCM 10045 / NBRC 100440) (Methanococcus jannaschii).